Consider the following 118-residue polypeptide: MLINFLLVGFGASLGAMLRYGISIFVKSKWKTDFPYATFFINITGSFLLGFLVSTALGPMWQLFLGTGFMGGYTTFSTFKVESMELKWKANFQVLFSYVGLTYLCGLIAAFIGIMLGV.

The next 4 membrane-spanning stretches (helical) occupy residues 5-25, 39-59, 61-81, and 98-118; these read FLLVGFGASLGAMLRYGISIF, FFINITGSFLLGFLVSTALGP, WQLFLGTGFMGGYTTFSTFKV, and YVGLTYLCGLIAAFIGIMLGV. 2 residues coordinate Na(+): glycine 71 and threonine 74.

The protein belongs to the fluoride channel Fluc/FEX (TC 1.A.43) family.

It is found in the cell membrane. It carries out the reaction fluoride(in) = fluoride(out). With respect to regulation, na(+) is not transported, but it plays an essential structural role and its presence is essential for fluoride channel function. Functionally, fluoride-specific ion channel. Important for reducing fluoride concentration in the cell, thus reducing its toxicity. This chain is Fluoride-specific ion channel FluC 1, found in Listeria innocua serovar 6a (strain ATCC BAA-680 / CLIP 11262).